Consider the following 258-residue polypeptide: ATP synthase subunit a (258 aa).

5 helical membrane-spanning segments follow: residues 38–58 (KPVWFLWLGAAITFLFMYVGA), 94–114 (WFPYSLTLFIFLLVLNIIGLF), 118–138 (YPVTSNISFTATLALFTFVLT), 193–213 (ILAGHLIIFVFLSLILYFGLP), and 215–235 (AFVSVPFAVVFYAFEIFVAVI).

The protein belongs to the ATPase A chain family. As to quaternary structure, F-type ATPases have 2 components, CF(1) - the catalytic core - and CF(0) - the membrane proton channel. CF(1) has five subunits: alpha(3), beta(3), gamma(1), delta(1), epsilon(1). CF(0) has three main subunits: a(1), b(2) and c(9-12). The alpha and beta chains form an alternating ring which encloses part of the gamma chain. CF(1) is attached to CF(0) by a central stalk formed by the gamma and epsilon chains, while a peripheral stalk is formed by the delta and b chains.

It is found in the cell membrane. Key component of the proton channel; it plays a direct role in the translocation of protons across the membrane. The protein is ATP synthase subunit a of Rubrobacter xylanophilus (strain DSM 9941 / JCM 11954 / NBRC 16129 / PRD-1).